A 1946-amino-acid chain; its full sequence is Sickle tail protein (1946 aa).

2 disordered regions span residues 1–83 (MEES…GMQP) and 113–176 (ERLR…VRSA). Polar residues predominate over residues 18–36 (DSRQMPQQGRSNLHVTSQE). A compositionally biased stretch (basic and acidic residues) spans 38-47 (AACRRPRERL). Serine 169 carries the post-translational modification Phosphoserine. Residue tyrosine 244 is modified to Phosphotyrosine. Disordered stretches follow at residues 305-324 (HPPH…HSLP) and 339-374 (AIPG…RDVK). The span at 308-324 (HVIPNSPPSTPVPHSLP) shows a compositional bias: pro residues. The span at 352–367 (SSLPVSRSISPSPSAI) shows a compositional bias: low complexity. Residue serine 357 is glycosylated (O-linked (GlcNAc) serine). Serine 361 and serine 365 each carry phosphoserine. Tyrosine 393 carries the phosphotyrosine modification. Positions 455-512 (SRKYPDSHLPTLGSKTPPASPHRVGDLRMIDLHPHLNTHGPPHTLQPDRASPSRQSFK) are disordered. The residue at position 470 (threonine 470) is a Phosphothreonine. Serine 474 is subject to Phosphoserine. Residues 477–488 (RVGDLRMIDLHP) are compositionally biased toward basic and acidic residues. Coiled coils occupy residues 557-581 (RETR…QSAL) and 644-685 (TSLL…ELEI). Serine 809 is modified (phosphoserine). Disordered stretches follow at residues 853-875 (EETA…DVKS) and 891-947 (SPVV…PVNG). Polar residues-rich tracts occupy residues 891–909 (SPVV…NPAQ) and 927–947 (QEVT…PVNG). Residues 962 to 990 (SAKNRAVSIEKAEKKWEEKRQNLEHYNGK) are a coiled coil. The tract at residues 1008-1221 (PNLEMPPASS…LRPSGPPKWE (214 aa)) is disordered. Phosphoserine occurs at positions 1032, 1035, 1038, and 1049. The span at 1049–1058 (SPPPPPPPPR) shows a compositional bias: pro residues. The span at 1151-1162 (NPNSHAEQSRAN) shows a compositional bias: polar residues. Over residues 1176–1194 (PKEKKNLEFYHEDVRKSDV) the composition is skewed to basic and acidic residues. Serine 1466 is subject to Phosphoserine. A coiled-coil region spans residues 1469–1495 (FEECDEELERMLTEEKIEEEEEDENED). Disordered stretches follow at residues 1482–1567 (EEKI…VDDQ), 1622–1664 (AKRF…RKST), and 1691–1946 (VDTS…KETS). Over residues 1484–1495 (KIEEEEEDENED) the composition is skewed to acidic residues. Residues 1498-1508 (VRTSSQMSCEQ) are compositionally biased toward polar residues. 2 stretches are compositionally biased toward basic and acidic residues: residues 1509 to 1518 (VDSRSDRMGQ) and 1622 to 1644 (AKRF…RRQE). Residues 1659-1688 (EIRKSTYRTLDSLEQTIKQLENTISEMSPR) are a coiled coil. Residues 1739–1759 (KGSSTTPQTSRMPVPMTSKNR) show a composition bias toward polar residues. Serine 1741 is modified (phosphoserine). Residues 1765–1777 (KASKQSKLQDPRQ) show a composition bias toward basic and acidic residues. A compositionally biased stretch (low complexity) spans 1806 to 1825 (ALSPSSGKSSSLPSASGDSS). Serine 1843 is subject to Phosphoserine. Residues 1851–1866 (HSASLIPSVSNGSLKF) show a composition bias toward polar residues. The segment covering 1890 to 1899 (AAPTTSSSSS) has biased composition (low complexity). A phosphoserine mark is found at serine 1899, serine 1902, and serine 1905. Polar residues predominate over residues 1920–1946 (HTPSLASYKAQNGSSSKATPSTAKETS).

Interacts with CPNE4 (via VWFA domain). In terms of tissue distribution, expressed predominantly in the notochord and mesonephros during embryogenesis as well as in other areas such as the epithalamus sulcus, lens vesicle, inner retinal layer, heart, hepatic primordial surface, infundibulum, surface ectoderm, hind gut and limb bud mesenchyme. In adults, expressed in a range of tissues including the nucleus pulposus, corpus callosum, kidney, cardiac muscle, Sertoli cells and hair follicles.

It is found in the cytoplasm. Its subcellular location is the cytoskeleton. It localises to the microtubule organizing center. The protein resides in the centrosome. In terms of biological role, required for normal development of intervertebral disks. In Mus musculus (Mouse), this protein is Sickle tail protein.